Reading from the N-terminus, the 227-residue chain is Urease accessory protein UreF (227 aa).

Belongs to the UreF family. In terms of assembly, ureD, UreF and UreG form a complex that acts as a GTP-hydrolysis-dependent molecular chaperone, activating the urease apoprotein by helping to assemble the nickel containing metallocenter of UreC. The UreE protein probably delivers the nickel.

It is found in the cytoplasm. Its function is as follows. Required for maturation of urease via the functional incorporation of the urease nickel metallocenter. The polypeptide is Urease accessory protein UreF (Shewanella halifaxensis (strain HAW-EB4)).